The sequence spans 529 residues: Interleukin-21 receptor (529 aa).

A signal peptide spans methionine 1 to serine 19. Intrachain disulfides connect cysteine 20–cysteine 109, cysteine 25–cysteine 35, and cysteine 65–cysteine 81. Topologically, residues cysteine 20–histidine 237 are extracellular. Fibronectin type-III domains follow at residues leucine 21–isoleucine 118 and lysine 119–glycine 228. N-linked (GlcNAc...) asparagine glycans are attached at residues asparagine 73, asparagine 97, asparagine 104, asparagine 125, and asparagine 182. Tryptophan 214 carries C-linked (Man) tryptophan glycosylation. The short motif at tryptophan 214 to serine 218 is the WSXWS motif element. Residues methionine 238–leucine 258 traverse the membrane as a helical segment. Residues proline 259–serine 529 are Cytoplasmic-facing. The Box 1 motif motif lies at isoleucine 266–glutamate 274. The segment at threonine 458 to serine 529 is disordered.

This sequence belongs to the type I cytokine receptor family. Type 4 subfamily. In terms of assembly, heterodimer with the common gamma subunit. Associates with JAK1. C-mannosylated at Trp-214 in the WSXWS motif, the sugar chain makes extensive hydrogen bonds with Asn-73 sugar, and bridges the two fibronectin domains transforming the V-shaped receptor into an A-frame. In terms of tissue distribution, selectively expressed in lymphoid tissues. Most highly expressed in thymus and spleen.

It is found in the membrane. Functionally, this is a receptor for interleukin-21. The protein is Interleukin-21 receptor (Il21r) of Mus musculus (Mouse).